The primary structure comprises 324 residues: Probable cell division protein WhiA (324 aa).

Positions 276 to 310 form a DNA-binding region, H-T-H motif; the sequence is TLKELGEMMQGGKVSKSGINHRLRKIDEFADKLRN.

It belongs to the WhiA family.

In terms of biological role, involved in cell division and chromosome segregation. This chain is Probable cell division protein WhiA, found in Shouchella clausii (strain KSM-K16) (Alkalihalobacillus clausii).